Here is a 261-residue protein sequence, read N- to C-terminus: Aromatic peroxygenase (261 aa).

Cys-36 provides a ligand contact to heme. Residues Asn-100, Asn-137, Asn-141, and Asn-220 are each glycosylated (N-linked (GlcNAc...) asparagine).

This sequence belongs to the chloroperoxidase family. Heme b serves as cofactor. Post-translationally, N-glycosylated.

Its function is as follows. Aromatic peroxidase that oxidizes aryl alcohols into the corresponding aldehydes and then into the corresponding benzoic acids. Catalyzes the regioselective peroxide-dependent hydroxylation of naphthalene to 1-naphthol and to a far lesser extent 2-naphthol via a naphthalene 1,2-oxide intermediate. Halogenates phenol to 2-bromophenol and 4-bromophenol. Oxidizes the sulfur-containing heterocycle dibenzothiophene to yield sulfoxidation products, and trace amounts of ring-hydroxylation products. This chain is Aromatic peroxygenase, found in Coprinellus radians (Coprophilous mushroom).